The sequence spans 295 residues: Protoheme IX farnesyltransferase (295 aa).

The next 9 membrane-spanning stretches (helical) occupy residues 27–47 (LVVFTAIAGMVAAPGSIHPFL), 48–68 (ALISLMCIALGSGSAGAINMW), 94–114 (SALEFGITIGILSVFIMAIAV), 117–137 (ISAALLAVSILFYVFVYTIWL), 144–164 (NIVIGGAAGAFPPMIGWAVVT), 171–191 (SFILFLIIFMWTPPHFWALSL), 216–236 (KHILIYSILLVLTSLLPALFL), 241–261 (FYLSMAIIEGCVFIWFAISVI), and 272–292 (MFSYSISYLFSLFASIIFCSI).

It belongs to the UbiA prenyltransferase family. Protoheme IX farnesyltransferase subfamily.

The protein localises to the cell membrane. The catalysed reaction is heme b + (2E,6E)-farnesyl diphosphate + H2O = Fe(II)-heme o + diphosphate. Its pathway is porphyrin-containing compound metabolism; heme O biosynthesis; heme O from protoheme: step 1/1. In terms of biological role, converts heme B (protoheme IX) to heme O by substitution of the vinyl group on carbon 2 of heme B porphyrin ring with a hydroxyethyl farnesyl side group. This is Protoheme IX farnesyltransferase from Wolbachia pipientis subsp. Culex pipiens (strain wPip).